Reading from the N-terminus, the 80-residue chain is Exodeoxyribonuclease 7 small subunit (80 aa).

This sequence belongs to the XseB family. As to quaternary structure, heterooligomer composed of large and small subunits.

The protein localises to the cytoplasm. The catalysed reaction is Exonucleolytic cleavage in either 5'- to 3'- or 3'- to 5'-direction to yield nucleoside 5'-phosphates.. Its function is as follows. Bidirectionally degrades single-stranded DNA into large acid-insoluble oligonucleotides, which are then degraded further into small acid-soluble oligonucleotides. The protein is Exodeoxyribonuclease 7 small subunit of Pseudomonas entomophila (strain L48).